The primary structure comprises 317 residues: MNATNTDVFAQVGGLEARGAKMKKRGTRFLIAALAVLAIAGIGAVTGWAISPSATPGSIDVPQVLASTFSDQVPGSEGGGLGGGLPFTSAVGAFTDFMAGPAIFTLGILGIVVAGAVLVFGGEFSGFVRSVCMMVIAVSMIFVSSNLVKGILGGDHDAGPAEPSPRARFMAAVEAKDFARVQELIEARGAKSAADYVLAQLAVAEGLDRKPGARVVVGKAAGSMAMPPAALGFTPRGEAAYAIERSAYGEPRSSIAKQYQQEWNRKAATWWAMAGVAGIIGAILAAAATGFVGLAVSIRNRVKRVRDLLVMEPGAEP.

In terms of biological role, belongs to the kla operon, which is associated with cryptic tellurite resistance, and IncW plasmid fertility inhibition. This is Protein KlaC (klaC) from Escherichia coli.